We begin with the raw amino-acid sequence, 336 residues long: tRNA-dihydrouridine(20/20a) synthase (336 aa).

Residues 24–26 (PMM) and Gln77 each bind FMN. The Proton donor role is filled by Cys107. FMN is bound by residues Lys146, His178, 218–220 (NGG), and 240–241 (GR).

The protein belongs to the Dus family. DusA subfamily. FMN serves as cofactor.

The catalysed reaction is 5,6-dihydrouridine(20) in tRNA + NADP(+) = uridine(20) in tRNA + NADPH + H(+). It catalyses the reaction 5,6-dihydrouridine(20) in tRNA + NAD(+) = uridine(20) in tRNA + NADH + H(+). It carries out the reaction 5,6-dihydrouridine(20a) in tRNA + NADP(+) = uridine(20a) in tRNA + NADPH + H(+). The enzyme catalyses 5,6-dihydrouridine(20a) in tRNA + NAD(+) = uridine(20a) in tRNA + NADH + H(+). Its function is as follows. Catalyzes the synthesis of 5,6-dihydrouridine (D), a modified base found in the D-loop of most tRNAs, via the reduction of the C5-C6 double bond in target uridines. Specifically modifies U20 and U20a in tRNAs. The protein is tRNA-dihydrouridine(20/20a) synthase of Pseudomonas syringae pv. tomato (strain ATCC BAA-871 / DC3000).